Reading from the N-terminus, the 82-residue chain is RNA-binding protein Hfq (82 aa).

In terms of domain architecture, Sm spans 10–70; it reads DIFLNGARKN…LSTITPSKAI (61 aa).

The protein belongs to the Hfq family. Homohexamer.

Its function is as follows. RNA chaperone that binds small regulatory RNA (sRNAs) and mRNAs to facilitate mRNA translational regulation in response to envelope stress, environmental stress and changes in metabolite concentrations. Also binds with high specificity to tRNAs. The sequence is that of RNA-binding protein Hfq from Clostridium kluyveri (strain NBRC 12016).